A 116-amino-acid polypeptide reads, in one-letter code: uncharacterized protein (116 aa).

A disordered region spans residues serine 77–arginine 116.

This is an uncharacterized protein from Frog virus 3 (isolate Goorha) (FV-3).